Here is a 178-residue protein sequence, read N- to C-terminus: Large ribosomal subunit protein uL6 (178 aa).

Belongs to the universal ribosomal protein uL6 family. Part of the 50S ribosomal subunit.

Functionally, this protein binds to the 23S rRNA, and is important in its secondary structure. It is located near the subunit interface in the base of the L7/L12 stalk, and near the tRNA binding site of the peptidyltransferase center. The sequence is that of Large ribosomal subunit protein uL6 from Streptococcus pneumoniae (strain 70585).